The sequence spans 335 residues: Holliday junction branch migration complex subunit RuvB (335 aa).

Residues 4 to 184 (ADRIISGQAK…FGIVQRLEFY (181 aa)) form a large ATPase domain (RuvB-L) region. ATP-binding positions include isoleucine 23, arginine 24, glycine 65, lysine 68, threonine 69, threonine 70, 131 to 133 (EDY), arginine 174, tyrosine 184, and arginine 221. Threonine 69 is a binding site for Mg(2+). The tract at residues 185–255 (SVEDLTSIVA…VAKQALSMLD (71 aa)) is small ATPAse domain (RuvB-S). The tract at residues 258–335 (DAGFDYLDRK…RHFGLQKLSD (78 aa)) is head domain (RuvB-H). Positions 294, 313, and 318 each coordinate DNA.

Belongs to the RuvB family. In terms of assembly, homohexamer. Forms an RuvA(8)-RuvB(12)-Holliday junction (HJ) complex. HJ DNA is sandwiched between 2 RuvA tetramers; dsDNA enters through RuvA and exits via RuvB. An RuvB hexamer assembles on each DNA strand where it exits the tetramer. Each RuvB hexamer is contacted by two RuvA subunits (via domain III) on 2 adjacent RuvB subunits; this complex drives branch migration. In the full resolvosome a probable DNA-RuvA(4)-RuvB(12)-RuvC(2) complex forms which resolves the HJ.

The protein localises to the cytoplasm. The enzyme catalyses ATP + H2O = ADP + phosphate + H(+). Its function is as follows. The RuvA-RuvB-RuvC complex processes Holliday junction (HJ) DNA during genetic recombination and DNA repair, while the RuvA-RuvB complex plays an important role in the rescue of blocked DNA replication forks via replication fork reversal (RFR). RuvA specifically binds to HJ cruciform DNA, conferring on it an open structure. The RuvB hexamer acts as an ATP-dependent pump, pulling dsDNA into and through the RuvAB complex. RuvB forms 2 homohexamers on either side of HJ DNA bound by 1 or 2 RuvA tetramers; 4 subunits per hexamer contact DNA at a time. Coordinated motions by a converter formed by DNA-disengaged RuvB subunits stimulates ATP hydrolysis and nucleotide exchange. Immobilization of the converter enables RuvB to convert the ATP-contained energy into a lever motion, pulling 2 nucleotides of DNA out of the RuvA tetramer per ATP hydrolyzed, thus driving DNA branch migration. The RuvB motors rotate together with the DNA substrate, which together with the progressing nucleotide cycle form the mechanistic basis for DNA recombination by continuous HJ branch migration. Branch migration allows RuvC to scan DNA until it finds its consensus sequence, where it cleaves and resolves cruciform DNA. The protein is Holliday junction branch migration complex subunit RuvB of Haemophilus influenzae (strain PittEE).